Here is a 121-residue protein sequence, read N- to C-terminus: MARISGVEIPNNKRVVVSLTYIYGIGLPTAQSVLKTLNISEDIRVKDLTEEQIKNISIEISKYKTEGELRREVSLNIKRLMEIGSYRGLRHRKGLPVRGQSSKTNARTVKGPRKTVANKKK.

Residues 92-121 (RKGLPVRGQSSKTNARTVKGPRKTVANKKK) form a disordered region. A compositionally biased stretch (basic residues) spans 110-121 (KGPRKTVANKKK).

It belongs to the universal ribosomal protein uS13 family. Part of the 30S ribosomal subunit. Forms a loose heterodimer with protein S19. Forms two bridges to the 50S subunit in the 70S ribosome.

Located at the top of the head of the 30S subunit, it contacts several helices of the 16S rRNA. In the 70S ribosome it contacts the 23S rRNA (bridge B1a) and protein L5 of the 50S subunit (bridge B1b), connecting the 2 subunits; these bridges are implicated in subunit movement. Contacts the tRNAs in the A and P-sites. The sequence is that of Small ribosomal subunit protein uS13 from Mycoplasma capricolum subsp. capricolum (strain California kid / ATCC 27343 / NCTC 10154).